Reading from the N-terminus, the 45-residue chain is Large ribosomal subunit protein bL34 (45 aa).

Residues 1–20 (MSKRTYQPNKRKRLKTHGFR) are compositionally biased toward basic residues. Positions 1-45 (MSKRTYQPNKRKRLKTHGFRSRMSTASGRRIISCRRRKNRETLTA) are disordered.

Belongs to the bacterial ribosomal protein bL34 family.

This Tropheryma whipplei (strain Twist) (Whipple's bacillus) protein is Large ribosomal subunit protein bL34.